Here is a 539-residue protein sequence, read N- to C-terminus: Glutamyl-tRNA(Gln) amidotransferase subunit B, mitochondrial (539 aa).

The protein belongs to the GatB/GatE family. GatB subfamily. As to quaternary structure, subunit of the heterotrimeric GatFAB amidotransferase (AdT) complex, composed of A, B and F subunits.

It is found in the mitochondrion. It catalyses the reaction L-glutamyl-tRNA(Gln) + L-glutamine + ATP + H2O = L-glutaminyl-tRNA(Gln) + L-glutamate + ADP + phosphate + H(+). Functionally, allows the formation of correctly charged Gln-tRNA(Gln) through the transamidation of misacylated Glu-tRNA(Gln) in the mitochondria. The reaction takes place in the presence of glutamine and ATP through an activated gamma-phospho-Glu-tRNA(Gln). This is Glutamyl-tRNA(Gln) amidotransferase subunit B, mitochondrial from Kluyveromyces lactis (strain ATCC 8585 / CBS 2359 / DSM 70799 / NBRC 1267 / NRRL Y-1140 / WM37) (Yeast).